The primary structure comprises 353 residues: Photosystem II D2 protein (353 aa).

Thr2 is subject to N-acetylthreonine. A Phosphothreonine modification is found at Thr2. A helical membrane pass occupies residues 41–61 (CAYFALGGWFTGTTFVTSWYT). His118 is a binding site for chlorophyll a. The helical transmembrane segment at 125-141 (GFMLRQFELARSVQLRP) threads the bilayer. Residues Gln130 and Asn143 each contribute to the pheophytin a site. Residues 153 to 166 (VFVSVFLIYPLGQS) form a helical membrane-spanning segment. A chlorophyll a-binding site is contributed by His198. A helical transmembrane segment spans residues 208–228 (AALLCAIHGATVENTLFEDGD). His215 and Phe262 together coordinate a plastoquinone. His215 lines the Fe cation pocket. Residue His269 coordinates Fe cation. Residues 279–295 (GLWMSALGVVGLALNLR) traverse the membrane as a helical segment.

This sequence belongs to the reaction center PufL/M/PsbA/D family. PSII is composed of 1 copy each of membrane proteins PsbA, PsbB, PsbC, PsbD, PsbE, PsbF, PsbH, PsbI, PsbJ, PsbK, PsbL, PsbM, PsbT, PsbX, PsbY, PsbZ, Psb30/Ycf12, at least 3 peripheral proteins of the oxygen-evolving complex and a large number of cofactors. It forms dimeric complexes. It depends on The D1/D2 heterodimer binds P680, chlorophylls that are the primary electron donor of PSII, and subsequent electron acceptors. It shares a non-heme iron and each subunit binds pheophytin, quinone, additional chlorophylls, carotenoids and lipids. There is also a Cl(-1) ion associated with D1 and D2, which is required for oxygen evolution. The PSII complex binds additional chlorophylls, carotenoids and specific lipids. as a cofactor.

It is found in the plastid. The protein localises to the chloroplast thylakoid membrane. The enzyme catalyses 2 a plastoquinone + 4 hnu + 2 H2O = 2 a plastoquinol + O2. In terms of biological role, photosystem II (PSII) is a light-driven water:plastoquinone oxidoreductase that uses light energy to abstract electrons from H(2)O, generating O(2) and a proton gradient subsequently used for ATP formation. It consists of a core antenna complex that captures photons, and an electron transfer chain that converts photonic excitation into a charge separation. The D1/D2 (PsbA/PsbD) reaction center heterodimer binds P680, the primary electron donor of PSII as well as several subsequent electron acceptors. D2 is needed for assembly of a stable PSII complex. The polypeptide is Photosystem II D2 protein (Aethionema grandiflorum (Persian stone-cress)).